We begin with the raw amino-acid sequence, 443 residues long: ATP-dependent protease ATPase subunit HslU (443 aa).

ATP is bound by residues Ile18, 60-65 (GVGKTE), Asp256, Glu321, and Arg393.

It belongs to the ClpX chaperone family. HslU subfamily. In terms of assembly, a double ring-shaped homohexamer of HslV is capped on each side by a ring-shaped HslU homohexamer. The assembly of the HslU/HslV complex is dependent on binding of ATP.

It localises to the cytoplasm. ATPase subunit of a proteasome-like degradation complex; this subunit has chaperone activity. The binding of ATP and its subsequent hydrolysis by HslU are essential for unfolding of protein substrates subsequently hydrolyzed by HslV. HslU recognizes the N-terminal part of its protein substrates and unfolds these before they are guided to HslV for hydrolysis. The sequence is that of ATP-dependent protease ATPase subunit HslU from Histophilus somni (strain 2336) (Haemophilus somnus).